A 98-amino-acid polypeptide reads, in one-letter code: Putative pterin-4-alpha-carbinolamine dehydratase (98 aa).

It belongs to the pterin-4-alpha-carbinolamine dehydratase family.

It catalyses the reaction (4aS,6R)-4a-hydroxy-L-erythro-5,6,7,8-tetrahydrobiopterin = (6R)-L-erythro-6,7-dihydrobiopterin + H2O. The protein is Putative pterin-4-alpha-carbinolamine dehydratase of Parasynechococcus marenigrum (strain WH8102).